Here is a 310-residue protein sequence, read N- to C-terminus: Ribosomal RNA small subunit methyltransferase H (310 aa).

S-adenosyl-L-methionine contacts are provided by residues 33–35, Asp-53, Phe-79, Asp-100, and Gln-107; that span reads AGH.

It belongs to the methyltransferase superfamily. RsmH family.

It localises to the cytoplasm. The catalysed reaction is cytidine(1402) in 16S rRNA + S-adenosyl-L-methionine = N(4)-methylcytidine(1402) in 16S rRNA + S-adenosyl-L-homocysteine + H(+). Functionally, specifically methylates the N4 position of cytidine in position 1402 (C1402) of 16S rRNA. This Clostridium perfringens (strain 13 / Type A) protein is Ribosomal RNA small subunit methyltransferase H.